The chain runs to 227 residues: Ribonuclease 3 (227 aa).

Residues 7–132 (LTAFMDRLGY…VIAAVYLDGG (126 aa)) form the RNase III domain. A Mg(2+)-binding site is contributed by E45. Residue D49 is part of the active site. Residues D118 and E121 each contribute to the Mg(2+) site. E121 is a catalytic residue. Positions 157 to 226 (DAKTALQEWA…AKDLLAQLAG (70 aa)) constitute a DRBM domain.

Belongs to the ribonuclease III family. Homodimer. It depends on Mg(2+) as a cofactor.

Its subcellular location is the cytoplasm. It carries out the reaction Endonucleolytic cleavage to 5'-phosphomonoester.. Functionally, digests double-stranded RNA. Involved in the processing of primary rRNA transcript to yield the immediate precursors to the large and small rRNAs (23S and 16S). Processes some mRNAs, and tRNAs when they are encoded in the rRNA operon. Processes pre-crRNA and tracrRNA of type II CRISPR loci if present in the organism. The polypeptide is Ribonuclease 3 (Jannaschia sp. (strain CCS1)).